A 580-amino-acid chain; its full sequence is MSKLKTLNRQFISNLETHKVTTDAKRNLILSILKSTTTKREAKNYLTKYQNQFDFNDDLDFNKNIKIKNEQLSLTNRDSQRELFINRFLNQSNPFINIYDREDVKLQKVPLRLAIFKIKFTKITIKQWKGIAETFKRLITLGISPIIMLDYDHLPSNSFKNNELYMINQGNKMLNYLGRPEEESDLKVTLLRSLFTSHKGVPTLDSLESILIPLYQGIIPIIQPIVYNADASKQEFLESDKLLLGLSSALIEKRTTDLLSIEKIVMIDPMGGIPSIERRQTSHVFINLSQEYSDILSELFIGHIEPKYRDTHVNNLNTMNNVLSFINEKSGNDETTGIITTPEIMSINIDQLNPIIYNVLTDRAIISSSLPSTTNRTPHLSTTIIKKGVDVQIFDIDNYDKDLTMQNLFDDKLVNKEKLINLLNDSFGKSLDVDPYLDRINDNIATVVIVGDYDGAAIITWEYSKGEKIAYLDKFAIAKKNQGLPGLADVIFKIILQSHPFELIWRSRKNNPVNKWYFERCCGCMSAPDSQWKIFYTGEVFDKKIDRFKRNPRHKNGVVNIDRKLQQYSEICEGITPSFK.

Residues 403 to 560 (LTMQNLFDDK…NPRHKNGVVN (158 aa)) enclose the N-acetyltransferase domain.

Belongs to the acetyltransferase family.

The protein localises to the mitochondrion. It carries out the reaction L-glutamate + acetyl-CoA = N-acetyl-L-glutamate + CoA + H(+). It participates in amino-acid biosynthesis; L-arginine biosynthesis; N(2)-acetyl-L-ornithine from L-glutamate: step 1/4. N-acetylglutamate synthase involved in arginine biosynthesis. This Candida dubliniensis (strain CD36 / ATCC MYA-646 / CBS 7987 / NCPF 3949 / NRRL Y-17841) (Yeast) protein is Amino-acid acetyltransferase, mitochondrial (ARG2).